Consider the following 931-residue polypeptide: MPMEKTFDPAAIEAKWARLWESRGLFRPHRPDATPFTIVNPPPNVTGALHIGHALDNTLQDVLIRYERLRGKDALWVVGTDHAGIATQMVVERQLNERQQKRTDFTRDEFVDKVWEWKATSGGQITRQLRRLGCSMDWSREQFTMDPHFTRAVVKVFVDLHKKGLIYRDKRLVNWDPKLKTAISDLEVETHEVQGGFWHFKYPLADGVKLDDGHDHIVVATTRPETMLADMAVAVHPDDARYKSVIGKFVELPITGRRVPVVADEHADPELGSGAVKITPGHDFNDFEVGKRAGFKPAEMLNMFDGDANVIQTADGLIPAEYLGLHRFKRDGIDGARELVVQRMKETGFLIPHTDKDGNAHDAEPRTIQTPFGDRGGVVIEPWLTDQWYVDAEKLAQAPIQAVRDGRIQIVPKTWEKTFFNWMENIQPWCVSRQLWWGHRIPAWYAEDGRTFVAETEEEAQAEAGAGVILTRDPDVLDTWFSSALWPFATLGWPDDTELLKRHYPNDVLISGFDILFFWDARMAMQGMEFMGEVPWRTLYLHGLVRAPDGQKMSKSKGNVVDPIGLIDQYGADALRFFMCAMESQGRDIKMDDARLAGYRNFATKLWNAARFCEANGIAASTSLEAPAATLPVNRWIIGEVADTVAAVEAAFAAYRFDDAANAIYSFAWDRFCDWYLELIKPVLSQKPSPLQGRGLGEGDEAVPAPADGPLSPALSPEGEREIAETRAVAGWVLDQILVMLHPFMPFITEELWTGLGDRADYPLITAKWPAPNAARDAAASADIDWLIKLVSELRTAKAELGLPPGARLTAHFPASLKDRADKLAAQLDRLARLETISFDPAPAGASAQLVVEGETITIPLEGVIDIAAERERLTRALAAATKERDSLAGRLNNPSFVERAKPEAVEKARTDHAAKEAEADRLSAALARLG.

The 'HIGH' region motif lies at 43-53 (PNVTGALHIGH). Residues 351–370 (IPHTDKDGNAHDAEPRTIQT) form a disordered region. Positions 353 to 365 (HTDKDGNAHDAEP) are enriched in basic and acidic residues. Residues 552–556 (KMSKS) carry the 'KMSKS' region motif. Lys555 is a binding site for ATP. The segment at 691 to 717 (LQGRGLGEGDEAVPAPADGPLSPALSP) is disordered. Positions 864 to 930 (VIDIAAERER…DRLSAALARL (67 aa)) form a coiled coil.

This sequence belongs to the class-I aminoacyl-tRNA synthetase family. ValS type 1 subfamily. Monomer.

It localises to the cytoplasm. The enzyme catalyses tRNA(Val) + L-valine + ATP = L-valyl-tRNA(Val) + AMP + diphosphate. In terms of biological role, catalyzes the attachment of valine to tRNA(Val). As ValRS can inadvertently accommodate and process structurally similar amino acids such as threonine, to avoid such errors, it has a 'posttransfer' editing activity that hydrolyzes mischarged Thr-tRNA(Val) in a tRNA-dependent manner. This chain is Valine--tRNA ligase, found in Sphingopyxis alaskensis (strain DSM 13593 / LMG 18877 / RB2256) (Sphingomonas alaskensis).